Here is a 159-residue protein sequence, read N- to C-terminus: MWKTTDLCDEFENELQICRQSFRSFGKKEQFHGKIATVKVKDDNVLVKEGLQTLPEGTVLVVDGGASTNCALLGDNLAAIAEERKLAGIIVNGYVRDSSELKNINIGILALGTMPNRSVKEGKGDRNISLQFGGVEWKPNDYVYVDEDGVIISEKSLYR.

Substrate-binding positions include 74-77 and arginine 96; that span reads GDNL. Residue aspartate 97 coordinates a divalent metal cation.

This sequence belongs to the class II aldolase/RraA-like family. Homotrimer. Requires a divalent metal cation as cofactor.

It catalyses the reaction 4-hydroxy-4-methyl-2-oxoglutarate = 2 pyruvate. It carries out the reaction oxaloacetate + H(+) = pyruvate + CO2. In terms of biological role, catalyzes the aldol cleavage of 4-hydroxy-4-methyl-2-oxoglutarate (HMG) into 2 molecules of pyruvate. Also contains a secondary oxaloacetate (OAA) decarboxylase activity due to the common pyruvate enolate transition state formed following C-C bond cleavage in the retro-aldol and decarboxylation reactions. This chain is Putative 4-hydroxy-4-methyl-2-oxoglutarate aldolase, found in Bacillus cereus (strain ZK / E33L).